The following is a 114-amino-acid chain: T cell receptor beta variable 6-6 (114 aa).

Residues 1–21 (MSISLLCCAAFPLLWAGPVNA) form the signal peptide. The region spanning 22 to 114 (GVTQTPKFRI…TSVYFCASSY (93 aa)) is the Ig-like domain. Cysteine 42 and cysteine 110 are oxidised to a cystine. A glycan (N-linked (GlcNAc...) asparagine) is linked at asparagine 84.

In terms of assembly, alpha-beta TR is a heterodimer composed of an alpha and beta chain; disulfide-linked. The alpha-beta TR is associated with the transmembrane signaling CD3 coreceptor proteins to form the TR-CD3 (TcR or TCR). The assembly of alpha-beta TR heterodimers with CD3 occurs in the endoplasmic reticulum where a single alpha-beta TR heterodimer associates with one CD3D-CD3E heterodimer, one CD3G-CD3E heterodimer and one CD247 homodimer forming a stable octameric structure. CD3D-CD3E and CD3G-CD3E heterodimers preferentially associate with TR alpha and TR beta chains, respectively. The association of the CD247 homodimer is the last step of TcR assembly in the endoplasmic reticulum and is required for transport to the cell surface.

Its subcellular location is the cell membrane. Functionally, v region of the variable domain of T cell receptor (TR) beta chain that participates in the antigen recognition. Alpha-beta T cell receptors are antigen specific receptors which are essential to the immune response and are present on the cell surface of T lymphocytes. Recognize peptide-major histocompatibility (MH) (pMH) complexes that are displayed by antigen presenting cells (APC), a prerequisite for efficient T cell adaptive immunity against pathogens. Binding of alpha-beta TR to pMH complex initiates TR-CD3 clustering on the cell surface and intracellular activation of LCK that phosphorylates the ITAM motifs of CD3G, CD3D, CD3E and CD247 enabling the recruitment of ZAP70. In turn ZAP70 phosphorylates LAT, which recruits numerous signaling molecules to form the LAT signalosome. The LAT signalosome propagates signal branching to three major signaling pathways, the calcium, the mitogen-activated protein kinase (MAPK) kinase and the nuclear factor NF-kappa-B (NF-kB) pathways, leading to the mobilization of transcription factors that are critical for gene expression and essential for T cell growth and differentiation. The T cell repertoire is generated in the thymus, by V-(D)-J rearrangement. This repertoire is then shaped by intrathymic selection events to generate a peripheral T cell pool of self-MH restricted, non-autoaggressive T cells. Post-thymic interaction of alpha-beta TR with the pMH complexes shapes TR structural and functional avidity. The chain is T cell receptor beta variable 6-6 from Homo sapiens (Human).